The sequence spans 568 residues: Protein AF-9 (568 aa).

The region spanning 1–138 (MASSCAVQVK…EDFRRKLLKA (138 aa)) is the YEATS domain. Histone H3K9cr binding regions lie at residues 78–80 (YAG) and 106–108 (LHL). Residues 138–475 (AGGDPNRSIH…PPPPLLKTNN (338 aa)) are disordered. Residues 149-190 (SSSSSSSSSSSSSSSSSSSSSSSSSSSSSSSSSSSSSSSSSS) are compositionally biased toward low complexity. Positions 202–265 (EHKEKPSKDS…PKPMSKEPKP (64 aa)) are enriched in basic and acidic residues. Phosphoserine is present on residues Ser-288 and Ser-294. Positions 295 to 300 (AKKRKK) match the Nuclear localization signal motif. Low complexity predominate over residues 303–313 (SEALFKSFSSA). Positions 322 to 349 (ADKKQIKDKSHVKMGKVKIESETSEKKK) are enriched in basic and acidic residues. Lys-339 is covalently cross-linked (Glycyl lysine isopeptide (Lys-Gly) (interchain with G-Cter in SUMO2)). Positions 357–368 (DIVDPNDSDVEE) are enriched in acidic residues. Low complexity predominate over residues 371–395 (SSKSDSEQPSPASSSSSSSSSFTPS). Phosphoserine is present on residues Ser-412 and Ser-419. The span at 414-429 (DNEEESDEVEDNDNDS) shows a compositional bias: acidic residues. The span at 445–461 (VSLSDGSDSESSSASSP) shows a compositional bias: low complexity. Ser-483 is subject to Phosphoserine.

As to quaternary structure, component of the super elongation complex (SEC), at least composed of EAF1, EAF2, CDK9, MLLT3/AF9, AFF (AFF1 or AFF4), the P-TEFb complex and ELL (ELL, ELL2 or ELL3). Interacts with BCOR. Interacts with CBX8. Interacts with ALKBH4. Enriched in undifferentiated hematopoietic stem cells in fetal liver, cord blood and bone marrow.

It localises to the nucleus. The protein localises to the chromosome. Its activity is regulated as follows. Crotonylated lysine binding is strongly inhibited by the peptide XL-07i, carrying a 2-furancarbonyl side chain and capped with a hydrophobic carboxybenzyl group. XL-07i targets the unique pi-pi-pi stacking interaction at the crotonylation recognition site. In terms of biological role, chromatin reader component of the super elongation complex (SEC), a complex required to increase the catalytic rate of RNA polymerase II transcription by suppressing transient pausing by the polymerase at multiple sites along the DNA. Specifically recognizes and binds acylated histone H3, with a preference for histone H3 that is crotonylated. Crotonylation marks active promoters and enhancers and confers resistance to transcriptional repressors. Recognizes and binds histone H3 crotonylated at 'Lys-9' (H3K9cr), and with slightly lower affinity histone H3 crotonylated at 'Lys-18' (H3K18cr). Also recognizes and binds histone H3 acetylated and butyrylated at 'Lys-9' (H3K9ac and H3K9bu, respectively), but with lower affinity than crotonylated histone H3. In the SEC complex, MLLT3 is required to recruit the complex to crotonylated histones. Recruitment of the SEC complex to crotonylated histones promotes recruitment of DOT1L on active chromatin to deposit histone H3 'Lys-79' methylation (H3K79me). Plays a key role in hematopoietic stem cell (HSC) maintenance by preserving, rather than conferring, HSC stemness. Acts by binding to the transcription start site of active genes in HSCs and sustaining level of H3K79me2, probably by recruiting DOT1L. This chain is Protein AF-9, found in Homo sapiens (Human).